A 278-amino-acid chain; its full sequence is Large ribosomal subunit protein uL2 (278 aa).

A disordered region spans residues 222-278 (GVVMNPIDHPHGGGEGRTSGGRHPVTPWGKPTKGKKTRSNKSTDKFILISRHKRKKK).

This sequence belongs to the universal ribosomal protein uL2 family. In terms of assembly, part of the 50S ribosomal subunit. Forms a bridge to the 30S subunit in the 70S ribosome.

In terms of biological role, one of the primary rRNA binding proteins. Required for association of the 30S and 50S subunits to form the 70S ribosome, for tRNA binding and peptide bond formation. It has been suggested to have peptidyltransferase activity; this is somewhat controversial. Makes several contacts with the 16S rRNA in the 70S ribosome. The chain is Large ribosomal subunit protein uL2 from Rhodopseudomonas palustris (strain BisB5).